A 585-amino-acid chain; its full sequence is Eukaryotic translation initiation factor 3 subunit D (585 aa).

Positions 110–130 (GGGTVFRGRGQRGVGQRGGRA) are enriched in gly residues. The interval 110–152 (GGGTVFRGRGQRGVGQRGGRAGFQRVGAGRGQGGDRYYDNRSA) is disordered. The tract at residues 300–314 (SIDLVTVNENAADAP) is RNA gate. A disordered region spans residues 560–585 (VPPNTFEEDDEAAEEQEEKAEDESEE). The segment covering 565 to 585 (FEEDDEAAEEQEEKAEDESEE) has biased composition (acidic residues).

It belongs to the eIF-3 subunit D family. In terms of assembly, component of the eukaryotic translation initiation factor 3 (eIF-3) complex.

It is found in the cytoplasm. Its function is as follows. mRNA cap-binding component of the eukaryotic translation initiation factor 3 (eIF-3) complex, which is involved in protein synthesis of a specialized repertoire of mRNAs and, together with other initiation factors, stimulates binding of mRNA and methionyl-tRNAi to the 40S ribosome. The eIF-3 complex specifically targets and initiates translation of a subset of mRNAs involved in cell proliferation. In the eIF-3 complex, eif3d specifically recognizes and binds the 7-methylguanosine cap of a subset of mRNAs. The sequence is that of Eukaryotic translation initiation factor 3 subunit D from Aspergillus fumigatus (strain CBS 144.89 / FGSC A1163 / CEA10) (Neosartorya fumigata).